Here is a 177-residue protein sequence, read N- to C-terminus: Ureidoglycolate lyase (177 aa).

This sequence belongs to the ureidoglycolate lyase family. Homodimer. Requires Ni(2+) as cofactor.

The enzyme catalyses (S)-ureidoglycolate = urea + glyoxylate. Its pathway is nitrogen metabolism; (S)-allantoin degradation. Catalyzes the catabolism of the allantoin degradation intermediate (S)-ureidoglycolate, generating urea and glyoxylate. Involved in the utilization of allantoin as nitrogen source. The protein is Ureidoglycolate lyase of Burkholderia cepacia (Pseudomonas cepacia).